The following is a 4717-amino-acid chain: Midasin (4717 aa).

AAA-ATPase protomer stretches follow at residues 149–384 (LVQK…FGAF), 458–797 (EQLA…GLRR), 871–1131 (EHYI…QEVI), 1157–1448 (SLKE…NACE), 1552–1811 (VLRA…EVFD), and 1858–2106 (VLES…FLLK). ATP contacts are provided by residues 159 to 166 (GPEGIGKK) and 474 to 481 (GETGTGKT). Serine 593 is modified (phosphoserine). ATP contacts are provided by residues 901-908 (GPTSSGKT), 1193-1200 (GDTGCGKT), 1566-1573 (GSPGVGKT), and 1876-1883 (GDTATGKT). The linker stretch occupies residues 2173 to 3925 (KLLRKVLLTN…SGVGAEDITN (1753 aa)). Disordered stretches follow at residues 3898–3924 (PQEGKSNSGELESGTGLGSGVGAEDIT), 3936–4283 (LANE…LGDH), and 4295–4365 (EWED…EVGD). 2 stretches are compositionally biased toward acidic residues: residues 3936–3950 (LANEEDTANQSDLDE) and 3973–3993 (ENSDSEEENQDLDEEVNDIPE). Residues 4020–4030 (NEQSAANNESD) show a composition bias toward polar residues. The span at 4031 to 4049 (LVSKEDDNKALEDKDRQEK) shows a compositional bias: basic and acidic residues. Residues 4050 to 4066 (EDEEEMSDDVGIDDEIQ) are compositionally biased toward acidic residues. Residues 4080-4103 (NEDHLDLPEDLKLDEKEGDVSKDS) show a composition bias toward basic and acidic residues. Acidic residues-rich tracts occupy residues 4104–4177 (DLED…ESTE), 4184–4196 (EELEQGEVPEDQA), and 4226–4236 (ENEELGEEDGA). Basic and acidic residues-rich tracts occupy residues 4258–4275 (QKGEDTSTPKEAMSEADR) and 4329–4342 (AEKDQIKSIDRDES). Residues 4343–4355 (ANQNPDSMNSTNI) show a composition bias toward polar residues. Residues 4505-4707 (QVMISIDDSK…ELPQLLSSAL (203 aa)) form the VWFA domain.

Belongs to the midasin family. As to quaternary structure, associates with pre-60S ribosomes in the nucleoplasm.

The protein resides in the nucleus. It localises to the nucleolus. Its subcellular location is the nucleoplasm. Nuclear chaperone required for maturation and nuclear export of pre-60S ribosome subunits. Functions at successive maturation steps to remove ribosomal factors at critical transition points, first driving the exit of early pre-60S particles from the nucleolus and then driving late pre-60S particles from the nucleus. This chain is Midasin (mdn1), found in Schizosaccharomyces pombe (strain 972 / ATCC 24843) (Fission yeast).